The sequence spans 115 residues: Migration and invasion enhancer 1 (115 aa).

Ser2 bears the N-acetylserine mark. Cys30 and Cys33 are oxidised to a cystine. Cys112 carries S-geranylgeranyl cysteine lipidation. The propeptide at 113 to 115 is removed in mature form; that stretch reads VIL.

The protein belongs to the SelWTH family. Interacts with GPX1. In terms of processing, isoprenylation facilitates association with the plasma membrane and enhances the migratory phenotype of cells by inducing increased filopodia formation. Widely expressed with highest levels in kidney followed by brain and testis.

It localises to the cytoplasm. Its subcellular location is the cytosol. It is found in the cell membrane. Its function is as follows. Increases cell migration by inducing filopodia formation at the leading edge of migrating cells. Plays a role in regulation of apoptosis, possibly through control of CASP3. May be involved in a redox-related process. The sequence is that of Migration and invasion enhancer 1 (Mien1) from Mus musculus (Mouse).